The primary structure comprises 49 residues: Osteocalcin (49 aa).

One can recognise a Gla domain in the interval Tyr1–Gly47. 4-hydroxyproline is present on Pro9. Residues Glu17, Glu21, Glu24, and Asp30 each contribute to the Ca(2+) site. 4-carboxyglutamate is present on residues Glu17, Glu21, and Glu24. Cys23 and Cys29 are oxidised to a cystine.

Belongs to the osteocalcin/matrix Gla protein family. Post-translationally, gamma-carboxyglutamic acid residues are formed by vitamin K dependent carboxylation. These residues are essential for the binding of calcium.

It is found in the secreted. Functionally, the carboxylated form is one of the main organic components of the bone matrix, which constitutes 1-2% of the total bone protein: it acts as a negative regulator of bone formation and is required to limit bone formation without impairing bone resorption or mineralization. The carboxylated form binds strongly to apatite and calcium. Its function is as follows. The uncarboxylated form acts as a hormone secreted by osteoblasts, which regulates different cellular processes, such as energy metabolism, male fertility and brain development. Regulates of energy metabolism by acting as a hormone favoring pancreatic beta-cell proliferation, insulin secretion and sensitivity and energy expenditure. Uncarboxylated osteocalcin hormone also promotes testosterone production in the testes: acts as a ligand for G protein-coupled receptor GPRC6A at the surface of Leydig cells, initiating a signaling response that promotes the expression of enzymes required for testosterone synthesis in a CREB-dependent manner. Also acts as a regulator of brain development: osteocalcin hormone crosses the blood-brain barrier and acts as a ligand for GPR158 on neurons, initiating a signaling response that prevents neuronal apoptosis in the hippocampus, favors the synthesis of all monoamine neurotransmitters and inhibits that of gamma-aminobutyric acid (GABA). Osteocalcin also crosses the placenta during pregnancy and maternal osteocalcin is required for fetal brain development. The chain is Osteocalcin from Lama guanicoe (Guanaco).